A 438-amino-acid chain; its full sequence is Putative hydroxypyruvate reductase (438 aa).

The enzyme catalyses (R)-glycerate + NAD(+) = 3-hydroxypyruvate + NADH + H(+). It carries out the reaction (R)-glycerate + NADP(+) = 3-hydroxypyruvate + NADPH + H(+). Its pathway is carbohydrate acid metabolism; tartrate degradation; 3-hydroxypyruvate from D-glycerate: step 1/1. In terms of biological role, degrades an unidentified toxic product from the first step of tartrate degradation. This Agrobacterium vitis (Rhizobium vitis) protein is Putative hydroxypyruvate reductase (ttuD).